A 375-amino-acid chain; its full sequence is Histidine biosynthesis bifunctional protein HisB (375 aa).

Residues methionine 1–proline 168 are histidinol-phosphatase. The active-site Nucleophile is the aspartate 8. The Mg(2+) site is built by aspartate 8, aspartate 10, and aspartate 128. Aspartate 10 serves as the catalytic Proton donor. The interval arginine 169–leucine 375 is imidazoleglycerol-phosphate dehydratase.

The protein in the N-terminal section; belongs to the histidinol-phosphatase family. It in the C-terminal section; belongs to the imidazoleglycerol-phosphate dehydratase family. Mg(2+) is required as a cofactor.

It localises to the cytoplasm. It catalyses the reaction D-erythro-1-(imidazol-4-yl)glycerol 3-phosphate = 3-(imidazol-4-yl)-2-oxopropyl phosphate + H2O. It carries out the reaction L-histidinol phosphate + H2O = L-histidinol + phosphate. It participates in amino-acid biosynthesis; L-histidine biosynthesis; L-histidine from 5-phospho-alpha-D-ribose 1-diphosphate: step 6/9. Its pathway is amino-acid biosynthesis; L-histidine biosynthesis; L-histidine from 5-phospho-alpha-D-ribose 1-diphosphate: step 8/9. The protein is Histidine biosynthesis bifunctional protein HisB of Xylella fastidiosa (strain 9a5c).